Consider the following 317-residue polypeptide: Apolipoprotein E (317 aa).

A signal peptide spans 1–18; it reads MKVLWAALLVTFLAGCQA. 8 consecutive repeat copies span residues 80–101, 102–123, 124–145, 146–167, 168–189, 190–211, 212–233, and 234–255. Residues 80 to 255 are 8 X 22 AA approximate tandem repeats; it reads ALMDETMKEL…RLDEVKEQVA (176 aa). A Methionine sulfoxide modification is found at M143. S147 carries the phosphoserine modification. The segment at 158–168 is LDL and other lipoprotein receptors binding; that stretch reads HLRKLRKRLLR. 162 to 165 provides a ligand contact to heparin; that stretch reads LRKR. Residues 210–290 form a lipid-binding and lipoprotein association region; sequence AATVGSLAGQ…SWFEPLVEDM (81 aa). 229 to 236 lines the heparin pocket; sequence GERLRARM. Residues 266-317 are homooligomerization; sequence QQIRLQAEAFQARLKSWFEPLVEDMQRQWAGLVEKVQAAMGTSAAPVPSDNH. Positions 278 to 290 are specificity for association with VLDL; the sequence is RLKSWFEPLVEDM.

The protein belongs to the apolipoprotein A1/A4/E family. As to quaternary structure, homotetramer. May interact with ABCA1; functionally associated with ABCA1 in the biogenesis of HDLs. May interact with APP/A4 amyloid-beta peptide; the interaction is extremely stable in vitro but its physiological significance is unclear. May interact with MAPT. May interact with MAP2. In the cerebrospinal fluid, interacts with secreted SORL1. Interacts with PMEL; this allows the loading of PMEL luminal fragment on ILVs to induce fibril nucleation. APOE exists as multiple glycosylated and sialylated glycoforms within cells and in plasma. The extent of glycosylation and sialylation are tissue and context specific. In terms of processing, glycated in plasma VLDL. Post-translationally, phosphorylated by FAM20C in the extracellular medium.

Its subcellular location is the secreted. The protein localises to the extracellular space. It is found in the extracellular matrix. The protein resides in the extracellular vesicle. It localises to the endosome. Its subcellular location is the multivesicular body. In terms of biological role, APOE is an apolipoprotein, a protein associating with lipid particles, that mainly functions in lipoprotein-mediated lipid transport between organs via the plasma and interstitial fluids. APOE is a core component of plasma lipoproteins and is involved in their production, conversion and clearance. Apolipoproteins are amphipathic molecules that interact both with lipids of the lipoprotein particle core and the aqueous environment of the plasma. As such, APOE associates with chylomicrons, chylomicron remnants, very low density lipoproteins (VLDL) and intermediate density lipoproteins (IDL) but shows a preferential binding to high-density lipoproteins (HDL). It also binds a wide range of cellular receptors including the LDL receptor/LDLR, the LDL receptor-related proteins LRP1, LRP2 and LRP8 and the very low-density lipoprotein receptor/VLDLR that mediate the cellular uptake of the APOE-containing lipoprotein particles. Finally, APOE also has a heparin-binding activity and binds heparan-sulfate proteoglycans on the surface of cells, a property that supports the capture and the receptor-mediated uptake of APOE-containing lipoproteins by cells. A main function of APOE is to mediate lipoprotein clearance through the uptake of chylomicrons, VLDLs, and HDLs by hepatocytes. APOE is also involved in the biosynthesis by the liver of VLDLs as well as their uptake by peripheral tissues ensuring the delivery of triglycerides and energy storage in muscle, heart and adipose tissues. By participating in the lipoprotein-mediated distribution of lipids among tissues, APOE plays a critical role in plasma and tissues lipid homeostasis. APOE is also involved in two steps of reverse cholesterol transport, the HDLs-mediated transport of cholesterol from peripheral tissues to the liver, and thereby plays an important role in cholesterol homeostasis. First, it is functionally associated with ABCA1 in the biogenesis of HDLs in tissues. Second, it is enriched in circulating HDLs and mediates their uptake by hepatocytes. APOE also plays an important role in lipid transport in the central nervous system, regulating neuron survival and sprouting. This Pan troglodytes (Chimpanzee) protein is Apolipoprotein E (APOE).